A 269-amino-acid chain; its full sequence is E3 ubiquitin-protein ligase complex slx8-rfp subunit slx8 (269 aa).

Positions 1–10 are enriched in basic and acidic residues; it reads MPPAHKRDTN. Disordered regions lie at residues 1–75 and 166–196; these read MPPA…LNRA and PRKQKFEQGKNPSTTNAEIEKEEPSKKQVVP. The segment covering 60 to 70 has biased composition (polar residues); sequence PSGTTSENESL. The RING-type zinc finger occupies 206-247; the sequence is CVICLDSPENLSCTPCGHIFCNFCILSALGTTAATQKCPVCR.

In terms of assembly, part of an E3 ubiquitin complex including rfp1, rfp2 and slx8. Interacts with rfp1 and rfp2.

The protein localises to the nucleus. The catalysed reaction is S-ubiquitinyl-[E2 ubiquitin-conjugating enzyme]-L-cysteine + [acceptor protein]-L-lysine = [E2 ubiquitin-conjugating enzyme]-L-cysteine + N(6)-ubiquitinyl-[acceptor protein]-L-lysine.. The protein operates within protein modification; protein ubiquitination. In terms of biological role, mediates ubiquitination and subsequent desumoylation/degradation of sumoylated proteins and proteins containing SUMO-like domains. Acts as a critical suppressor of gross chromosomal rearrangements (GCRs) during normal cell cycle progression. Involved in stabilizing, restarting or resolving transiently stalled replication forks. Prevents accumulation of DNA damage during cell cycle progression. The protein is E3 ubiquitin-protein ligase complex slx8-rfp subunit slx8 (slx8) of Schizosaccharomyces pombe (strain 972 / ATCC 24843) (Fission yeast).